Consider the following 1077-residue polypeptide: Bifunctional helicase and thymine dioxygenase JBP2 (1077 aa).

Residues 1-516 (MPMFMDGASQ…PPLCIPFKIA (516 aa)) are thymine dioxygenase. Fe cation contacts are provided by His391, Asp393, and His441. Arg455 is a binding site for 2-oxoglutarate. The interval 517 to 1075 (KTLSLTQHAA…RNIDTVKSER (559 aa)) is DNA Helicase. In terms of domain architecture, Helicase ATP-binding spans 531–706 (SRRIKEGDGC…YRLVGWVDDK (176 aa)). Residue 544–551 (LTMGLGKT) coordinates ATP. The DEAH box signature appears at 657-660 (DEGH). The Helicase C-terminal domain maps to 871 to 1032 (KLTALISILH…QVVPGHDLVD (162 aa)).

The protein in the C-terminal section; belongs to the SNF2/RAD54 helicase family. It in the N-terminal section; belongs to the TET family. JBP2 subfamily. Requires Fe(2+) as cofactor.

It localises to the nucleus. The catalysed reaction is ATP + H2O = ADP + phosphate + H(+). It carries out the reaction thymine + 2-oxoglutarate + O2 = 5-hydroxymethyluracil + succinate + CO2. Dioxygenase that catalyzes the first step of DNA base J (beta-d-glucosyl-HOMedU) biosynthesis by converting thymine to 5-hydroxymethyluracil (HOMedU). DNA base J is a hypermodified thymidine residue found in the genome of kinetoplastid parasites, which is localized primarily to repetitive DNA, namely the telomeres, and is implicated in the regulation of antigenic variation. Probably also acts as a DNA helicase. Recognizes and binds specific regions of the genome, hydrolyzes ATP and allows the DNA base J de novo synthesis. Involved in initial synthesis of DNA base J, JBP1 being able to act via the basal level of DNA base J and propagate further synthesis. In contrast to JBP1, it does not specifically bind DNA base J, however it binds chromatin. The chain is Bifunctional helicase and thymine dioxygenase JBP2 (JBP2) from Trypanosoma brucei brucei (strain 927/4 GUTat10.1).